A 229-amino-acid chain; its full sequence is Translation initiation factor 6 (229 aa).

It belongs to the eIF-6 family.

Functionally, binds to the 50S ribosomal subunit and prevents its association with the 30S ribosomal subunit to form the 70S initiation complex. The polypeptide is Translation initiation factor 6 (Thermococcus kodakarensis (strain ATCC BAA-918 / JCM 12380 / KOD1) (Pyrococcus kodakaraensis (strain KOD1))).